A 109-amino-acid chain; its full sequence is UPF0060 membrane protein PA14_21660 (109 aa).

A run of 4 helical transmembrane segments spans residues 5-25, 27-47, 59-79, and 84-104; these read LWFV…YLWL, LGKS…FALL, AYAA…AFVE, and LWSD…VLFG.

This sequence belongs to the UPF0060 family.

It is found in the cell inner membrane. The protein is UPF0060 membrane protein PA14_21660 of Pseudomonas aeruginosa (strain UCBPP-PA14).